An 89-amino-acid chain; its full sequence is Small ribosomal subunit protein uS15 (89 aa).

The protein belongs to the universal ribosomal protein uS15 family. As to quaternary structure, part of the 30S ribosomal subunit. Forms a bridge to the 50S subunit in the 70S ribosome, contacting the 23S rRNA.

One of the primary rRNA binding proteins, it binds directly to 16S rRNA where it helps nucleate assembly of the platform of the 30S subunit by binding and bridging several RNA helices of the 16S rRNA. In terms of biological role, forms an intersubunit bridge (bridge B4) with the 23S rRNA of the 50S subunit in the ribosome. In Pseudomonas putida (strain GB-1), this protein is Small ribosomal subunit protein uS15.